A 533-amino-acid polypeptide reads, in one-letter code: Spindle pole body protein CSA6 (533 aa).

2 disordered regions span residues Met1 to Thr32 and Asp53 to Glu130. Basic and acidic residues-rich tracts occupy residues Pro18–Asp30 and Asp53–Pro68. The segment covering Pro83–Pro94 has biased composition (low complexity). Positions Ser103–Asn121 are enriched in polar residues. Residues Lys136–Asp236 are a coiled coil. Residues Glu309 to Thr318 show a composition bias toward basic and acidic residues. Disordered stretches follow at residues Glu309–Ala329 and Ser349–Lys453. 2 stretches are compositionally biased toward polar residues: residues Ser349 to Gln392 and Ile405 to His421. The span at Pro432 to Ser445 shows a compositional bias: basic and acidic residues.

The protein resides in the cytoplasm. Its subcellular location is the cytoskeleton. It localises to the microtubule organizing center. It is found in the spindle pole body. In terms of biological role, plays a role in mitotic spindle pole body organization, possibly at the point of spindle pole body separation. Required for mitotic exit. In Candida dubliniensis (strain CD36 / ATCC MYA-646 / CBS 7987 / NCPF 3949 / NRRL Y-17841) (Yeast), this protein is Spindle pole body protein CSA6.